Consider the following 80-residue polypeptide: Raniseptin-1 (80 aa).

The N-terminal stretch at 1-22 (MAFLKKSLFLVLFLGIVSLSIC) is a signal peptide. Positions 23-49 (EEEKREGEEEEKQEEENEELSEEELRE) are excised as a propeptide.

It belongs to the frog skin active peptide (FSAP) family. Dermaseptin subfamily. Expressed by the skin glands.

It localises to the secreted. Has antibacterial activity against the Gram-negative bacteria E.coli ATCC 25922 (MIC=5 uM), P.aeruginosa ATCC 27853 (MIC=10 uM) and X.citri (MIC&lt; 2 uM), and the Gram-positive bacterium S.aureus ATCC 29313 (MIC=20 uM). Does not have hemolytic activity against human erythrocytes. This is Raniseptin-1 from Boana raniceps (Chaco tree frog).